The following is a 1070-amino-acid chain: Alpha-glucosidase (1070 aa).

The N-terminal stretch at 1 to 35 (MRSIKAASLTPLLAALFTTLSSTLALPSSVWEHQL) is a signal peptide. Asn48, Asn99, Asn144, Asn161, Asn208, Asn384, Asn458, Asn480, and Asn513 each carry an N-linked (GlcNAc...) asparagine glycan. The active-site Nucleophile is Asp526. Glu529 is a catalytic residue. 5 N-linked (GlcNAc...) asparagine glycosylation sites follow: Asn544, Asn566, Asn574, Asn578, and Asn635. Residue Asp730 is the Proton donor of the active site. Asn818, Asn885, Asn916, Asn983, Asn992, Asn996, Asn1008, Asn1029, Asn1043, and Asn1052 each carry an N-linked (GlcNAc...) asparagine glycan.

It belongs to the glycosyl hydrolase 31 family.

It catalyses the reaction Hydrolysis of terminal, non-reducing (1-&gt;4)-linked alpha-D-glucose residues with release of alpha-D-glucose.. Functionally, hydrolyzes a broad range of alpha-D-linked glucopyranosides, including maltose (alpha-1,4), sucrose (alpha-1,2), isomaltose (alpha-1,6) and turanose (alpha-1,3). The polypeptide is Alpha-glucosidase (Candida tsukubaensis (Yeast)).